A 1381-amino-acid chain; its full sequence is MASNEGVENRPFPYLTVDADLLSNLRQSAAEGLFHSFDLLVGKDAREAGIKFEVLLGVYTNAIQYVRFLETALAVSCVNTEFKDLSRMTDGKIQFRISVPTIAHGDGRRPSKQRTFIVVKNCHKHHISTEMELSMLDLEILHSIPETPVEYAEYVGAVKTVASALQFGVDALERGLINTVLSVKLRHAPPMFILQTLADPTFTERGFSKTVKSDLIAMFKRHLLEHSFFLDRAENMGSGFSQYVRSRLSEMVAAVSGESVLKGVSTYTTAKGGEPVGGVFIVTDNVLRQLLTFLGEEADNQIMGPSSYASFVVRGENLVTAVSYGRVMRTFEHFMARIVDSPEKAGSTKSDLPAVAAGVEDQPRVPISAAVIKLGNHAVAVESLQKMYNDTQSPYPLNRRMQYSYYFPVGLFMPNPKYTTSAAIKMLDNPTQQLPVEAWIVNKNNLLLAFNLQNALKVLCHPRLHTPAHTLNSLNAAPAPRDRRETYSLQHRRPNHMNVLVIVDEFYDNKYAAPVTDIALKCGLPTEDFLHPSNYDLLRLELHPLYDIYIGRDAGERARHRAVHRLMVGNLPTPLAPAAFQEARGQQFETATSLAHVVDQAVIETVQDTAYDTAYPAFFYVVEAMIHGFEEKFVMNVPLVSLCINTYWERAGRLAFVNSFSMIKFICRHLGNNAISKEAYSMYRKIYGELIALEQALMRLAGSDVVGDESVGQYVCALLDPNLLPPVAYTDIFTHLLTVSDRAPQIIIGNEVYADTLAAPQFIERVGNMDEMAAQFVALYGYRVNGDHDHDFRLHLGPYVDEGHADVLEKIFYYVFLPTCTNAHMCGLGVDFQHVAQTLAYNGPAFSHHFTRDEDILDNLENGTLRDLLEISDLRPTVGMIRDLSASFMTCPTFTRTVRVSVDNDVTQQLAPNPADKRTEQTVLVNGLVAFAFSERTRAVTQCLFHAIPFHMFYGDPRVAATMHQDVATFVMRNPQQRAVEAFNRPEQLFAEYREWHRSPMGKYAAECLPSLVSISGMTAMHIKMSPMAYIAQAKLKIHPGVAMTVVRTDEILSENILFSSRASTSMFIGTPNVSRREARVDAVTFEVHHEMASIDTGLSYSSTMTPARVAAITTDMGIHTQDFFSVFPAEAFGNQQVNDYIKAKVGAQRNGTLLRDPRTYLAGMTNVNGAPGLCHGQQATCEIIVTPVTADVAYFQKSNSPRGRAACVVSCENYNQEVAEGLIYDHSRPDAAYEYRSTVNPWASQLGSLGDIMYNSSYRQTAVPGLYSPCRAFFNKEELLRNNRGLYNMVNEYSQRLGGHPATSNTEVQFVVIAGTDVFLEQPCSFLQEAFPALSASSRALIDEFMSVKQTHAPIHYGHYIIEEVAPVRRILKFGNKVVF.

Belongs to the herpesviridae major capsid protein family. In terms of assembly, homomultimer. Makes the hexons and eleven out of twelve pentons. Interacts with triplex proteins 1/TRX1 and 2/TRX2; adjacent capsomers are linked together in groups of three by triplexes, heterotrimeric complexes composed of one molecule of TRX1 and two molecules of TRX2. Interacts with scaffold protein; this interaction allows efficient MCP transport to the host nucleus. Interacts with capsid vertex component 2/CVC2. Interacts with the small capsomere-interacting protein/SCP.

The protein resides in the virion. Its subcellular location is the host nucleus. Self-assembles to form an icosahedral capsid with a T=16 symmetry, about 200 nm in diameter, and consisting of 150 hexons and 12 pentons (total of 162 capsomers). Hexons form the edges and faces of the capsid and are each composed of six MCP molecules. In contrast, one penton is found at each of the 12 vertices. Eleven of the pentons are MCP pentamers, while the last vertex is occupied by the portal complex. The capsid is surrounded by a layer of proteinaceous material designated the tegument which, in turn, is enclosed in an envelope of host cell-derived lipids containing virus-encoded glycoproteins. The polypeptide is Major capsid protein (Epstein-Barr virus (strain AG876) (HHV-4)).